A 510-amino-acid polypeptide reads, in one-letter code: Amidophosphoribosyltransferase (510 aa).

Cys-2 serves as the catalytic Nucleophile. A Glutamine amidotransferase type-2 domain is found at 2–239 (CGILGIVLAN…PGEAVIIPKN (238 aa)). Residues Asp-373 and Asp-374 each coordinate Mg(2+).

In the C-terminal section; belongs to the purine/pyrimidine phosphoribosyltransferase family. Requires Mg(2+) as cofactor.

The catalysed reaction is 5-phospho-beta-D-ribosylamine + L-glutamate + diphosphate = 5-phospho-alpha-D-ribose 1-diphosphate + L-glutamine + H2O. The protein operates within purine metabolism; IMP biosynthesis via de novo pathway; N(1)-(5-phospho-D-ribosyl)glycinamide from 5-phospho-alpha-D-ribose 1-diphosphate: step 1/2. This chain is Amidophosphoribosyltransferase (ADE4), found in Saccharomyces cerevisiae (strain ATCC 204508 / S288c) (Baker's yeast).